Here is a 269-residue protein sequence, read N- to C-terminus: 4-hydroxy-tetrahydrodipicolinate reductase (269 aa).

NAD(+) contacts are provided by residues 11-16 and Glu-37; that span reads GASGRM. Arg-38 provides a ligand contact to NADP(+). Residues 101–103 and 125–128 contribute to the NAD(+) site; these read GTT and AGNM. Catalysis depends on His-158, which acts as the Proton donor/acceptor. His-159 serves as a coordination point for (S)-2,3,4,5-tetrahydrodipicolinate. The Proton donor role is filled by Lys-162. (S)-2,3,4,5-tetrahydrodipicolinate is bound at residue 168-169; it reads GT.

It belongs to the DapB family.

The protein localises to the cytoplasm. It catalyses the reaction (S)-2,3,4,5-tetrahydrodipicolinate + NAD(+) + H2O = (2S,4S)-4-hydroxy-2,3,4,5-tetrahydrodipicolinate + NADH + H(+). The catalysed reaction is (S)-2,3,4,5-tetrahydrodipicolinate + NADP(+) + H2O = (2S,4S)-4-hydroxy-2,3,4,5-tetrahydrodipicolinate + NADPH + H(+). Its pathway is amino-acid biosynthesis; L-lysine biosynthesis via DAP pathway; (S)-tetrahydrodipicolinate from L-aspartate: step 4/4. Catalyzes the conversion of 4-hydroxy-tetrahydrodipicolinate (HTPA) to tetrahydrodipicolinate. In Cereibacter sphaeroides (strain ATCC 17029 / ATH 2.4.9) (Rhodobacter sphaeroides), this protein is 4-hydroxy-tetrahydrodipicolinate reductase.